We begin with the raw amino-acid sequence, 264 residues long: Formamidopyrimidine-DNA glycosylase (264 aa).

Residue Pro2 is the Schiff-base intermediate with DNA of the active site. Glu3 serves as the catalytic Proton donor. Catalysis depends on Lys58, which acts as the Proton donor; for beta-elimination activity. His89, Arg107, and Arg144 together coordinate DNA. The FPG-type zinc finger occupies 229–263; the sequence is RVYQRTGEPCLNCKTPIRRVIVTQRSSHFCPHCQK. Residue Arg253 is the Proton donor; for delta-elimination activity of the active site.

Belongs to the FPG family. Monomer. Requires Zn(2+) as cofactor.

The enzyme catalyses Hydrolysis of DNA containing ring-opened 7-methylguanine residues, releasing 2,6-diamino-4-hydroxy-5-(N-methyl)formamidopyrimidine.. It catalyses the reaction 2'-deoxyribonucleotide-(2'-deoxyribose 5'-phosphate)-2'-deoxyribonucleotide-DNA = a 3'-end 2'-deoxyribonucleotide-(2,3-dehydro-2,3-deoxyribose 5'-phosphate)-DNA + a 5'-end 5'-phospho-2'-deoxyribonucleoside-DNA + H(+). Functionally, involved in base excision repair of DNA damaged by oxidation or by mutagenic agents. Acts as a DNA glycosylase that recognizes and removes damaged bases. Has a preference for oxidized purines, such as 7,8-dihydro-8-oxoguanine (8-oxoG). Has AP (apurinic/apyrimidinic) lyase activity and introduces nicks in the DNA strand. Cleaves the DNA backbone by beta-delta elimination to generate a single-strand break at the site of the removed base with both 3'- and 5'-phosphates. The sequence is that of Formamidopyrimidine-DNA glycosylase from Solibacter usitatus (strain Ellin6076).